Consider the following 261-residue polypeptide: X-box-binding protein 1 (261 aa).

Residues 1–185 (MVVVAPAQSP…VQAQLSPLQN (185 aa)) lie on the Cytoplasmic side of the membrane. Positions 27-37 (TGGAPAGRALP) are enriched in low complexity. Residues 27–65 (TGGAPAGRALPVMVPGQQGASPEGASGVPPQARKRQRLT) form a disordered region. A phosphoserine mark is found at Ser47 and Ser68. Residues 70–133 (EEKALRRKLK…HGLVVENQEL (64 aa)) enclose the bZIP domain. The tract at residues 72–94 (KALRRKLKNRVAAQTARDRKKAR) is basic motif. The tract at residues 76 to 92 (RKLKNRVAAQTARDRKK) is nuclear localization signal (NLS). A leucine-zipper region spans residues 98-133 (LEQQVVDLEEENQKLLLENQLLREKTHGLVVENQEL). The chain crosses the membrane as a helical; Signal-anchor for type II membrane protein span at residues 186–203 (ISPWTLMALTLQTLSLTS). At 204–261 (CWAFCSTWTQSCSSDVLPQSLPAWSSSQKWTQKDPVPYRPPLLHPWGRHQPSWKPLMN) the chain is on the lumenal side.

This sequence belongs to the bZIP family. As to quaternary structure, isoform 1 interacts with HM13. Isoform 1 interacts with RNF139; the interaction induces ubiquitination and degradation of isoform 1. Isoform 1 interacts (via luminal domain) with DERL1; the interaction obviates the need for ectodomain shedding prior HM13/SPP-mediated XBP1 isoform 1 cleavage. Isoform 1 interacts with HDAC3 and AKT1; the interactions occur in endothelial cell (EC) under disturbed flow. Isoform 1 interacts with the oncoprotein FOS. Interacts with SIRT1. Post-translationally, isoform 1 is ubiquitinated, leading to proteasome-mediated degradation in response to ER stress. In terms of processing, X-box-binding protein 1, cytoplasmic form and luminal form are produced by intramembrane proteolytic cleavage of ER membrane-anchored isoform 1 triggered by HM13/SPP in a DERL1-RNF139-dependent and VCP/p97-independent manner. X-box-binding protein 1, luminal form is ubiquitinated leading to proteasomal degradation. Acetylated by EP300; acetylation positively regulates the transcriptional activity of XBP1. Deacetylated by SIRT1; deacetylation negatively regulates the transcriptional activity of XBP1.

The protein resides in the nucleus. The protein localises to the endoplasmic reticulum. It is found in the cytoplasm. It localises to the endoplasmic reticulum membrane. Its subcellular location is the membrane. Functionally, functions as a transcription factor during endoplasmic reticulum (ER) stress by regulating the unfolded protein response (UPR). Required for cardiac myogenesis and hepatogenesis during embryonic development, and the development of secretory tissues such as exocrine pancreas and salivary gland. Involved in terminal differentiation of B lymphocytes to plasma cells and production of immunoglobulins. Modulates the cellular response to ER stress in a PIK3R-dependent manner. Binds to the cis-acting X box present in the promoter regions of major histocompatibility complex class II genes. Involved in VEGF-induced endothelial cell (EC) proliferation and retinal blood vessel formation during embryonic development but also for angiogenesis in adult tissues under ischemic conditions. Functions also as a major regulator of the UPR in obesity-induced insulin resistance and type 2 diabetes for the management of obesity and diabetes prevention. In terms of biological role, acts as a weak transcriptional factor. Together with HDAC3, contributes to the activation of NFE2L2-mediated HMOX1 transcription factor gene expression in a PI(3)K/mTORC2/Akt-dependent signaling pathway leading to EC survival under disturbed flow/oxidative stress. Binds to the ER stress response element (ERSE) upon ER stress. Binds to the consensus 5'-GATGACGTG[TG]N(3)[AT]T-3' sequence related to cAMP responsive element (CRE)-like sequences. Associates preferentially to the HDAC3 gene promoter region in a static flow-dependent manner. Binds to the CDH5/VE-cadherin gene promoter region. The sequence is that of X-box-binding protein 1 from Bos taurus (Bovine).